The chain runs to 368 residues: Propane 2-monooxygenase, hydroxylase component small subunit (368 aa).

Residues 1–33 (MSAPAQPRERSFPSIEFTDAEADAREFPSSRSR) form a disordered region.

Belongs to the TmoE/XamoE family. The propane 2-monooxygenase multicomponent enzyme system is composed of an electron transfer component and a monooxygenase component interacting with the effector protein PrmD. The electron transfer component is composed of a reductase (PrmB), and the monooxygenase component is formed by a large subunit (PrmA) and a small subunit (PrmC). Probably requires the presence of the chaperonin-like protein PrmG to ensure a productive folding, resulting of a soluble PrmC, which leads to the active form of PrmABCD.

It carries out the reaction propane + NADH + O2 + H(+) = propan-2-ol + NAD(+) + H2O. The enzyme catalyses phenol + NADH + O2 + H(+) = hydroquinone + NAD(+) + H2O. Component of the propane 2-monooxygenase multicomponent enzyme system which is involved in the degradation of propane via the O2-dependent hydroxylation of propane. Under acetone induction, also able to catalyze the oxidation of phenol to yield hydroquinone. This Gordonia sp. (strain TY-5) protein is Propane 2-monooxygenase, hydroxylase component small subunit.